A 191-amino-acid chain; its full sequence is Imidazoleglycerol-phosphate dehydratase (191 aa).

It belongs to the imidazoleglycerol-phosphate dehydratase family.

It is found in the cytoplasm. It catalyses the reaction D-erythro-1-(imidazol-4-yl)glycerol 3-phosphate = 3-(imidazol-4-yl)-2-oxopropyl phosphate + H2O. Its pathway is amino-acid biosynthesis; L-histidine biosynthesis; L-histidine from 5-phospho-alpha-D-ribose 1-diphosphate: step 6/9. In Methanosarcina barkeri (strain Fusaro / DSM 804), this protein is Imidazoleglycerol-phosphate dehydratase.